A 557-amino-acid polypeptide reads, in one-letter code: Dihydroxy-acid dehydratase (557 aa).

Position 50 (cysteine 50) interacts with [2Fe-2S] cluster. Residue aspartate 82 participates in Mg(2+) binding. Cysteine 123 contributes to the [2Fe-2S] cluster binding site. Residues aspartate 124 and lysine 125 each coordinate Mg(2+). The residue at position 125 (lysine 125) is an N6-carboxylysine. Cysteine 195 provides a ligand contact to [2Fe-2S] cluster. Residue glutamate 447 participates in Mg(2+) binding. Serine 473 acts as the Proton acceptor in catalysis.

The protein belongs to the IlvD/Edd family. As to quaternary structure, homodimer. [2Fe-2S] cluster serves as cofactor. Requires Mg(2+) as cofactor.

It carries out the reaction (2R)-2,3-dihydroxy-3-methylbutanoate = 3-methyl-2-oxobutanoate + H2O. The catalysed reaction is (2R,3R)-2,3-dihydroxy-3-methylpentanoate = (S)-3-methyl-2-oxopentanoate + H2O. The protein operates within amino-acid biosynthesis; L-isoleucine biosynthesis; L-isoleucine from 2-oxobutanoate: step 3/4. It functions in the pathway amino-acid biosynthesis; L-valine biosynthesis; L-valine from pyruvate: step 3/4. Functionally, functions in the biosynthesis of branched-chain amino acids. Catalyzes the dehydration of (2R,3R)-2,3-dihydroxy-3-methylpentanoate (2,3-dihydroxy-3-methylvalerate) into 2-oxo-3-methylpentanoate (2-oxo-3-methylvalerate) and of (2R)-2,3-dihydroxy-3-methylbutanoate (2,3-dihydroxyisovalerate) into 2-oxo-3-methylbutanoate (2-oxoisovalerate), the penultimate precursor to L-isoleucine and L-valine, respectively. This Janthinobacterium sp. (strain Marseille) (Minibacterium massiliensis) protein is Dihydroxy-acid dehydratase.